The primary structure comprises 336 residues: E3 ubiquitin-protein ligase RING2 (336 aa).

N-acetylserine is present on serine 2. Residues 2 to 179 are interaction with HIP2; that stretch reads SQAVQTNGTQ…AEDNGDSSHC (178 aa). Serine 41 is modified (phosphoserine). The RING-type zinc finger occupies 51–91; it reads CPICLDMLKNTMTTKECLHRFCADCIITALRSGNKECPTCR. Residues 93-98 form an interaction with nucleosomes via an acidic patch on histone H2A and histone H2B region; the sequence is KLVSKR. Lysine 112 participates in a covalent cross-link: Glycyl lysine isopeptide (Lys-Gly) (interchain with G-Cter in ubiquitin). Residues serine 143 and serine 168 each carry the phosphoserine modification. Positions 157–213 are disordered; the sequence is QRGKKQQIENGSGAEDNGDSSHCSNASTHSNQEAGPSNKRTKTSDDSGLEPDNNNAA. Over residues 176–191 the composition is skewed to polar residues; the sequence is SSHCSNASTHSNQEAG. Residues lysine 249 and lysine 323 each participate in a glycyl lysine isopeptide (Lys-Gly) (interchain with G-Cter in SUMO2) cross-link.

Component of chromatin-associated Polycomb (PcG) complexes. Component of a number of PRC1-like complexes; these complexes contain either the polycomb group ring finger protein PCGF1, or PCGF2, or PCGF3, or BMI1, or PCGF5, or PCGF6. Distinct PRC1-like complexes are composed of a RING1 subunit (RING1B or RING1A), one of the six PCGF proteins (PCGF1, PCGF2, PCGF3, BMI1, PCGF5 or PCGF6), one PHC protein (PHC1, PHC2 or PHC3) and one of the CBX proteins (CBX2, CBX4, CBX6, CBX7 or CBX8). Part of a complex that contains RNF2, UB2D3 and BMI1; within that complex RNF2 and BMI1 form a tight heterodimer, where UB2D3 interacts only with RNF2. The complex composed of RNF2, UB2D3 and BMI1 binds nucleosomes, and has activity only with nucleosomal histone H2A. Part of a complex that contains PCGF5, RNF2 and UBE2D3. Part of a complex that contains AUTS2, PCGF5, RNF2, CSNK2B and RYBP. Interacts with CBX6 and CBX8. Interacts with PHC1, PCGF2, RYBP, CBX7, CBX4, CBX2, RNF1/RING1, BMI1 and PHC2. Interaction with RYBP and CBX7 is mutually exclusive; both compete for the same binding site on RNF2. Component of repressive BCOR complex containing a Polycomb group subcomplex at least composed of RYBP, PCGF1, BCOR and RING1. Interacts with CBX2 and PHC1. Interacts with CHTOP. Interacts with AURKB. Part of the E2F6.com-1 complex in G0 phase composed of E2F6, MGA, MAX, TFDP1, CBX3, BAT8, EUHMTASE1, RNF1/RING1, RNF2/RING2, MBLR, L3MBTL2 and YAF2. Component of some MLL1/MLL complex, at least composed of the core components KMT2A/MLL1, ASH2L, HCFC1/HCF1, WDR5 and RBBP5, as well as the facultative components BACC1, CHD8, E2F6, HSP70, INO80C, KANSL1, LAS1L, MAX, MCRS1, MGA, MYST1/MOF, PELP1, PHF20, PRP31, RING2, RUVB1/TIP49A, RUVB2/TIP49B, SENP3, TAF1, TAF4, TAF6, TAF7, TAF9 and TEX10. Interacts with RYBP, HIP2 and TFCP2. Interacts with NUPR1. Interacts with SAMD7 in a PHC2-dependent manner. In terms of processing, monoubiquitinated, by auto-ubiquitination. Polyubiquitinated in the presence of UBE2D3 (in vitro).

The protein localises to the nucleus. It localises to the cytoplasm. It is found in the chromosome. It catalyses the reaction S-ubiquitinyl-[E2 ubiquitin-conjugating enzyme]-L-cysteine + [acceptor protein]-L-lysine = [E2 ubiquitin-conjugating enzyme]-L-cysteine + N(6)-ubiquitinyl-[acceptor protein]-L-lysine.. It functions in the pathway protein modification; protein ubiquitination. In terms of biological role, E3 ubiquitin-protein ligase that mediates monoubiquitination of 'Lys-119' of histone H2A (H2AK119Ub), thereby playing a central role in histone code and gene regulation. H2AK119Ub gives a specific tag for epigenetic transcriptional repression and participates in X chromosome inactivation of female mammals. May be involved in the initiation of both imprinted and random X inactivation. Essential component of a Polycomb group (PcG) multiprotein PRC1-like complex, a complex class required to maintain the transcriptionally repressive state of many genes, including Hox genes, throughout development. PcG PRC1 complex acts via chromatin remodeling and modification of histones, rendering chromatin heritably changed in its expressibility. E3 ubiquitin-protein ligase activity is enhanced by BMI1/PCGF4. Acts as the main E3 ubiquitin ligase on histone H2A of the PRC1 complex, while RING1 may rather act as a modulator of RNF2/RING2 activity. Plays a role in the transcriptional repression of genes that are required for pluripotency in embryonic stem cells, thereby contributing to differentiation of the ectodermal and endodermal germ layers. Association with the chromosomal DNA is cell-cycle dependent. In resting B- and T-lymphocytes, interaction with AURKB leads to block its activity, thereby maintaining transcription in resting lymphocytes. Also acts as a negative regulator of autophagy by mediating ubiquitination of AMBRA1, leading to its subsequent degradation. The polypeptide is E3 ubiquitin-protein ligase RING2 (RNF2) (Pongo abelii (Sumatran orangutan)).